The sequence spans 35 residues: Potassium channel toxin alpha-KTx 23.2 (35 aa).

Intrachain disulfides connect Cys-6–Cys-26, Cys-12–Cys-31, and Cys-16–Cys-33.

Belongs to the short scorpion toxin superfamily. Potassium channel inhibitor family. Alpha-KTx 23 subfamily. Expressed by the venom gland.

Its subcellular location is the secreted. Functionally, selectively and irreversibly binds (K(d)=2.9 pM) and blocks Kv1.3/KCNA3 potassium channels of human T-lymphocytes. Weakly blocks Kv1.2/KCNA2 (9%). This Vaejovis mexicanus smithi (Mexican scorpion) protein is Potassium channel toxin alpha-KTx 23.2.